Consider the following 350-residue polypeptide: Phosphoribosylformylglycinamidine cyclo-ligase (350 aa).

It belongs to the AIR synthase family.

It is found in the cytoplasm. The catalysed reaction is 2-formamido-N(1)-(5-O-phospho-beta-D-ribosyl)acetamidine + ATP = 5-amino-1-(5-phospho-beta-D-ribosyl)imidazole + ADP + phosphate + H(+). The protein operates within purine metabolism; IMP biosynthesis via de novo pathway; 5-amino-1-(5-phospho-D-ribosyl)imidazole from N(2)-formyl-N(1)-(5-phospho-D-ribosyl)glycinamide: step 2/2. This is Phosphoribosylformylglycinamidine cyclo-ligase from Cupriavidus metallidurans (strain ATCC 43123 / DSM 2839 / NBRC 102507 / CH34) (Ralstonia metallidurans).